We begin with the raw amino-acid sequence, 277 residues long: S-formylglutathione hydrolase FrmB (277 aa).

Active-site charge relay system residues include Ser145, Asp221, and His254.

It belongs to the esterase D family.

It catalyses the reaction S-formylglutathione + H2O = formate + glutathione + H(+). In terms of biological role, serine hydrolase involved in the detoxification of formaldehyde. Hydrolyzes S-formylglutathione to glutathione and formate. The chain is S-formylglutathione hydrolase FrmB (frmB) from Escherichia coli O1:K1 / APEC.